Reading from the N-terminus, the 775-residue chain is Beta-galactosidase 7 (775 aa).

An N-terminal signal peptide occupies residues 1–17 (MRGGMAITAALVVVAAA). The active-site Proton donor is Glu-185. The Nucleophile role is filled by Glu-256. N-linked (GlcNAc...) asparagine glycans are attached at residues Asn-257, Asn-266, Asn-277, Asn-358, and Asn-602. The SUEL-type lectin domain maps to 689 to 775 (RGKVPKVRIW…KSLLVVADCR (87 aa)).

The protein belongs to the glycosyl hydrolase 35 family.

It localises to the secreted. Its subcellular location is the extracellular space. It is found in the apoplast. The enzyme catalyses Hydrolysis of terminal non-reducing beta-D-galactose residues in beta-D-galactosides.. The chain is Beta-galactosidase 7 from Oryza sativa subsp. japonica (Rice).